The following is a 413-amino-acid chain: Multidrug resistance protein MdtA (413 aa).

The signal sequence occupies residues 1 to 25 (MKNKRRTYFFQFAVLAVVIATAYFA). The segment at 394–413 (ANTYDQMDKSKPSNSKVENT) is disordered.

The protein belongs to the membrane fusion protein (MFP) (TC 8.A.1) family. As to quaternary structure, part of a tripartite efflux system composed of MdtA, MdtB and MdtC.

It is found in the cell inner membrane. The polypeptide is Multidrug resistance protein MdtA (Xenorhabdus bovienii (strain SS-2004) (Xenorhabdus nematophila subsp. bovienii)).